Reading from the N-terminus, the 131-residue chain is Small ribosomal subunit protein uS8 (131 aa).

Belongs to the universal ribosomal protein uS8 family. Part of the 30S ribosomal subunit. Contacts proteins S5 and S12.

Its function is as follows. One of the primary rRNA binding proteins, it binds directly to 16S rRNA central domain where it helps coordinate assembly of the platform of the 30S subunit. The sequence is that of Small ribosomal subunit protein uS8 from Bacteroides thetaiotaomicron (strain ATCC 29148 / DSM 2079 / JCM 5827 / CCUG 10774 / NCTC 10582 / VPI-5482 / E50).